The primary structure comprises 317 residues: Hps1-dma1 cluster cytochrome P450 monooxygenase cyp3.1 (317 aa).

The tract at residues 183–205 (PAIETDRKTSSHSRSPTALADKQ) is disordered. C260 contacts heme.

Belongs to the cytochrome P450 family. It depends on heme as a cofactor.

It functions in the pathway secondary metabolite biosynthesis. Its function is as follows. Cytochrome P450 monooxygenase; part of the hps1-dma1 gene cluster that probably mediates the biosynthesis a derivative of cyclopiazonic acid (CPA). The hybrid polyketide synthase-nonribosomal peptide synthetase (PKS-NRPS) nps1 might incorporates acetyl-CoA, malonyl-CoA, and tryptophan (Trp) and utilizes a C-terminal redox-incompetent reductase domain to make and release the tryptophan tetramic acid, cyclo-acetoacetyl-L-tryptophan (c-AATrp), as the first intermediate in the pathway. In addition, the cluster also includes the tryptophan dimethylallyltransferase dma1, the FAD-dependent oxidoreductase toxD, the cytochrome P450 monooxygenase cyp3.1 and the methyltransferase DOTSEDRAFT_139328; the latter 2 being not present in all CPA-producing fungi but involved in additional modifications that occur in biosynthesis the of a range of CPA and CPA-like products. Further studies are required to clarify whether the CPA-like hps1-dma1 cluster is functional or a non-functional relic reflecting evolution of D.septosporum. The polypeptide is Hps1-dma1 cluster cytochrome P450 monooxygenase cyp3.1 (cyp3.1) (Dothistroma septosporum (strain NZE10 / CBS 128990) (Red band needle blight fungus)).